A 353-amino-acid polypeptide reads, in one-letter code: Quinolinate synthase (353 aa).

Histidine 47 and serine 68 together coordinate iminosuccinate. Cysteine 113 is a [4Fe-4S] cluster binding site. Iminosuccinate-binding positions include tyrosine 139 to asparagine 141 and serine 156. Cysteine 200 is a [4Fe-4S] cluster binding site. Residues histidine 226–glutamate 228 and threonine 243 each bind iminosuccinate. Cysteine 297 provides a ligand contact to [4Fe-4S] cluster.

The protein belongs to the quinolinate synthase family. Type 1 subfamily. [4Fe-4S] cluster serves as cofactor.

The protein resides in the cytoplasm. The enzyme catalyses iminosuccinate + dihydroxyacetone phosphate = quinolinate + phosphate + 2 H2O + H(+). The protein operates within cofactor biosynthesis; NAD(+) biosynthesis; quinolinate from iminoaspartate: step 1/1. Its function is as follows. Catalyzes the condensation of iminoaspartate with dihydroxyacetone phosphate to form quinolinate. The chain is Quinolinate synthase from Yersinia pestis bv. Antiqua (strain Nepal516).